Here is a 278-residue protein sequence, read N- to C-terminus: Small ribosomal subunit protein uS3 (278 aa).

A KH type-2 domain is found at 39–107; that stretch reads LRKAISKKYV…KVQLNIVEIS (69 aa). A disordered region spans residues 255 to 278; the sequence is AEIPAEEKPKRVVKKAENITKEEE.

It belongs to the universal ribosomal protein uS3 family. In terms of assembly, part of the 30S ribosomal subunit. Forms a tight complex with proteins S10 and S14.

In terms of biological role, binds the lower part of the 30S subunit head. Binds mRNA in the 70S ribosome, positioning it for translation. This chain is Small ribosomal subunit protein uS3, found in Dehalococcoides mccartyi (strain ATCC BAA-2100 / JCM 16839 / KCTC 5957 / BAV1).